The following is a 542-amino-acid chain: Phenylalanine--tRNA ligase beta subunit (542 aa).

The B5 domain maps to 269 to 344; the sequence is LRRYTVSVSA…MTIGYDKLSP (76 aa). Positions 322, 328, 331, and 332 each coordinate Mg(2+).

It belongs to the phenylalanyl-tRNA synthetase beta subunit family. Type 2 subfamily. In terms of assembly, tetramer of two alpha and two beta subunits. It depends on Mg(2+) as a cofactor.

It localises to the cytoplasm. The catalysed reaction is tRNA(Phe) + L-phenylalanine + ATP = L-phenylalanyl-tRNA(Phe) + AMP + diphosphate + H(+). In Sulfolobus acidocaldarius (strain ATCC 33909 / DSM 639 / JCM 8929 / NBRC 15157 / NCIMB 11770), this protein is Phenylalanine--tRNA ligase beta subunit.